Here is a 319-residue protein sequence, read N- to C-terminus: Zinc finger protein-like 1 homolog (319 aa).

The segment at 1–43 (MGLCKCPKRKVTNLFCYEHRVNVCEFCLVDNHPNCVVQSYLNW) adopts a B box-type; degenerate zinc-finger fold. The RING-type; atypical zinc-finger motif lies at 53-101 (CSLCHTTLTQGETIRLNCLHLLHWRCFDDWAASFPPTTAPAGYRCPCCS). Positions 212–232 (ESSSDTRPLLRQDRDADNEEN) are disordered. Residues 219 to 232 (PLLRQDRDADNEEN) show a composition bias toward basic and acidic residues. Residues 264–284 (KMAIFVMFLALLALITIITVL) form a helical membrane-spanning segment.

This sequence belongs to the ZFPL1 family.

The protein localises to the membrane. The sequence is that of Zinc finger protein-like 1 homolog from Caenorhabditis briggsae.